An 84-amino-acid chain; its full sequence is Large ribosomal subunit protein bL27 (84 aa).

The interval M1–R20 is disordered.

This sequence belongs to the bacterial ribosomal protein bL27 family.

The chain is Large ribosomal subunit protein bL27 from Blochmanniella pennsylvanica (strain BPEN).